Consider the following 105-residue polypeptide: Large ribosomal subunit protein uL24 (105 aa).

It belongs to the universal ribosomal protein uL24 family. As to quaternary structure, part of the 50S ribosomal subunit.

Its function is as follows. One of two assembly initiator proteins, it binds directly to the 5'-end of the 23S rRNA, where it nucleates assembly of the 50S subunit. In terms of biological role, one of the proteins that surrounds the polypeptide exit tunnel on the outside of the subunit. The protein is Large ribosomal subunit protein uL24 of Rhodospirillum centenum (strain ATCC 51521 / SW).